We begin with the raw amino-acid sequence, 218 residues long: Protein-L-isoaspartate O-methyltransferase 1 (218 aa).

The active site involves Ser-69.

The protein belongs to the methyltransferase superfamily. L-isoaspartyl/D-aspartyl protein methyltransferase family.

The protein localises to the cytoplasm. It catalyses the reaction [protein]-L-isoaspartate + S-adenosyl-L-methionine = [protein]-L-isoaspartate alpha-methyl ester + S-adenosyl-L-homocysteine. Functionally, catalyzes the methyl esterification of L-isoaspartyl residues in peptides and proteins that result from spontaneous decomposition of normal L-aspartyl and L-asparaginyl residues. It plays a role in the repair and/or degradation of damaged proteins. In Marinobacter nauticus (strain ATCC 700491 / DSM 11845 / VT8) (Marinobacter aquaeolei), this protein is Protein-L-isoaspartate O-methyltransferase 1.